Here is a 325-residue protein sequence, read N- to C-terminus: Casein kinase I isoform alpha (325 aa).

Position 2 is an N-acetylalanine (A2). Position 4 is a phosphoserine (S4). The residue at position 8 (K8) is an N6-acetyllysine. Positions 17-285 (YKLVRKIGSG…YLRQLFRILF (269 aa)) constitute a Protein kinase domain. Residues 23–31 (IGSGSFGDI) and K46 each bind ATP. Residue D136 is the Proton acceptor of the active site. I156 bears the Phosphoserine mark.

The protein belongs to the protein kinase superfamily. CK1 Ser/Thr protein kinase family. Casein kinase I subfamily. As to quaternary structure, interacts with the Axin complex. Interacts with TUT1, leading to TUT1 phosphorylation. Interacts with FAM83A, FAM83B, FAM83C, FAM83D, FAM83E, FAM83F, FAM83G and FAM83H (via DUF1669). Interaction with FAM83H recruits CSNK1A1 to keratin filaments. Post-translationally, phosphorylated by MTOR in response to mitogenic stimulation, leading to its activation.

The protein resides in the cytoplasm. Its subcellular location is the cytoskeleton. The protein localises to the microtubule organizing center. It localises to the centrosome. It is found in the chromosome. The protein resides in the centromere. Its subcellular location is the kinetochore. The protein localises to the nucleus speckle. It localises to the cilium basal body. It is found in the spindle. The catalysed reaction is L-seryl-[protein] + ATP = O-phospho-L-seryl-[protein] + ADP + H(+). It carries out the reaction L-threonyl-[protein] + ATP = O-phospho-L-threonyl-[protein] + ADP + H(+). Its function is as follows. Casein kinases are operationally defined by their preferential utilization of acidic proteins such as caseins as substrates. Can phosphorylate a large number of proteins. Participates in Wnt signaling. Phosphorylates CTNNB1 at 'Ser-45'. May phosphorylate PER1 and PER2. May play a role in segregating chromosomes during mitosis. May play a role in keratin cytoskeleton disassembly and thereby, it may regulate epithelial cell migration. Acts as a positive regulator of mTORC1 and mTORC2 signaling in response to nutrients by mediating phosphorylation of DEPTOR inhibitor. Acts as an inhibitor of NLRP3 inflammasome assembly by mediating phosphorylation of NLRP3. The chain is Casein kinase I isoform alpha (Csnk1a1) from Rattus norvegicus (Rat).